The following is a 23-amino-acid chain: NLVQFELLIMKVAKRSGLLSYSA.

Ca(2+) is required as a cofactor. In terms of processing, contains 7 disulfide bonds. In terms of tissue distribution, expressed by the venom gland.

It localises to the secreted. The enzyme catalyses a 1,2-diacyl-sn-glycero-3-phosphocholine + H2O = a 1-acyl-sn-glycero-3-phosphocholine + a fatty acid + H(+). Functionally, snake venom phospholipase A2 (PLA2) that significantly inhibits ADP-induced platelet aggregation in platelet-rich plasma of human, rabbit and guinea pig. PLA2 catalyzes the calcium-dependent hydrolysis of the 2-acyl groups in 3-sn-phosphoglycerides. This chain is Acidic phospholipase A2 Cvv-E6c, found in Crotalus viridis viridis (Prairie rattlesnake).